The following is a 131-amino-acid chain: D-ribose pyranase (131 aa).

The Proton donor role is filled by His20. Substrate contacts are provided by residues Asp28, His98, and Tyr120–Asn122.

Belongs to the RbsD / FucU family. RbsD subfamily. As to quaternary structure, homodecamer.

The protein resides in the cytoplasm. The catalysed reaction is beta-D-ribopyranose = beta-D-ribofuranose. The protein operates within carbohydrate metabolism; D-ribose degradation; D-ribose 5-phosphate from beta-D-ribopyranose: step 1/2. In terms of biological role, catalyzes the interconversion of beta-pyran and beta-furan forms of D-ribose. This is D-ribose pyranase from Lactobacillus gasseri (strain ATCC 33323 / DSM 20243 / BCRC 14619 / CIP 102991 / JCM 1131 / KCTC 3163 / NCIMB 11718 / NCTC 13722 / AM63).